A 233-amino-acid polypeptide reads, in one-letter code: Ribosome-recycling factor, mitochondrial (233 aa).

The protein belongs to the RRF family.

The protein resides in the mitochondrion. Functionally, necessary for protein synthesis in mitochondria. Functions as a ribosome recycling factor in mitochondria. This chain is Ribosome-recycling factor, mitochondrial (RRF1), found in Candida glabrata (strain ATCC 2001 / BCRC 20586 / JCM 3761 / NBRC 0622 / NRRL Y-65 / CBS 138) (Yeast).